Consider the following 378-residue polypeptide: MAGETIVNLLDLDAEGLVAYCGSLGEKAFRAKQLQRWIHQYNAADFDGMTDLAKSLREKLKGRAVIGTPDILSDHVSADGTRKWLINVGNGNAVETVFIPEETRGTLCVSSQAGCAVNCRFCSTGKQGFSRNLSTGEIVGQLRMAEFALRASLGRAPGPNGKAERVITNVVMMGMGEPLLNYSAVVPAMRLMLDDNAYGLSRRRVTLSTSGVVPMMDRLGAELPVALAVSLHAPNDALRDELVPLNKKHPLRELMAACQRYLKVAPRDFITFEYCMLDGVNDTEAHARELLAVTRDVPCKFNLIPFNPFPESGLVRSKTEQIKRFAQVLIDAGVVTTIRKTRGDDIDAACGQLAGAVKDRTRLAERTGASKIIEVRAV.

Glutamate 95 acts as the Proton acceptor in catalysis. Residues 101-345 (EETRGTLCVS…TTIRKTRGDD (245 aa)) form the Radical SAM core domain. An intrachain disulfide couples cysteine 108 to cysteine 350. [4Fe-4S] cluster is bound by residues cysteine 115, cysteine 119, and cysteine 122. Residues 176–177 (GE), serine 208, 230–232 (SLH), and asparagine 307 contribute to the S-adenosyl-L-methionine site. The active-site S-methylcysteine intermediate is cysteine 350.

The protein belongs to the radical SAM superfamily. RlmN family. It depends on [4Fe-4S] cluster as a cofactor.

Its subcellular location is the cytoplasm. It carries out the reaction adenosine(2503) in 23S rRNA + 2 reduced [2Fe-2S]-[ferredoxin] + 2 S-adenosyl-L-methionine = 2-methyladenosine(2503) in 23S rRNA + 5'-deoxyadenosine + L-methionine + 2 oxidized [2Fe-2S]-[ferredoxin] + S-adenosyl-L-homocysteine. The enzyme catalyses adenosine(37) in tRNA + 2 reduced [2Fe-2S]-[ferredoxin] + 2 S-adenosyl-L-methionine = 2-methyladenosine(37) in tRNA + 5'-deoxyadenosine + L-methionine + 2 oxidized [2Fe-2S]-[ferredoxin] + S-adenosyl-L-homocysteine. In terms of biological role, specifically methylates position 2 of adenine 2503 in 23S rRNA and position 2 of adenine 37 in tRNAs. m2A2503 modification seems to play a crucial role in the proofreading step occurring at the peptidyl transferase center and thus would serve to optimize ribosomal fidelity. This Burkholderia pseudomallei (strain K96243) protein is Dual-specificity RNA methyltransferase RlmN.